A 204-amino-acid chain; its full sequence is MLHSLFRLTLLFYALFNSLGSLPVFVALLKKFSFRKQQRIILRECIFALLTLILFITFGQGFFRLLEVSLPAFQLTGGILLGSLAINMMKALPSQEETFDQYEDEPIFYPLAFPVITGPATITSTLGHMEEGIFPKELVLGAIMLAWAFSLITLFFSSSINRLFGQMGLLALERLFGISLALMAGNLMLKAISTAFNIGYYVMA.

6 consecutive transmembrane segments (helical) span residues 8 to 28 (LTLL…FVAL), 46 to 66 (IFAL…FRLL), 68 to 88 (VSLP…AINM), 107 to 127 (IFYP…STLG), 138 to 158 (LVLG…FFSS), and 176 to 196 (FGIS…STAF).

This sequence belongs to the UPF0056 (MarC) family.

The protein resides in the cell membrane. This Chlamydia muridarum (strain MoPn / Nigg) protein is UPF0056 membrane protein TC_0241.